A 1309-amino-acid chain; its full sequence is Putative receptor-type tyrosine-protein phosphatase mosPTP-1 (1309 aa).

The signal sequence occupies residues methionine 1–alanine 36. Residues alanine 37–alanine 572 are Extracellular-facing. N-linked (GlcNAc...) asparagine glycosylation is found at asparagine 60, asparagine 107, asparagine 162, asparagine 257, asparagine 353, asparagine 389, asparagine 455, asparagine 501, and asparagine 513. Fibronectin type-III domains follow at residues proline 147–glutamate 244, lysine 249–valine 347, lysine 350–serine 449, and alanine 450–histidine 553. A helical membrane pass occupies residues valine 573–leucine 593. The Cytoplasmic segment spans residues tryptophan 594 to serine 1309. Tyrosine-protein phosphatase domains follow at residues phenylalanine 656–alanine 921 and isoleucine 944–methionine 1196. Cysteine 862 serves as the catalytic Phosphocysteine intermediate. The tract at residues asparagine 1239 to threonine 1269 is disordered. Gly residues predominate over residues glycine 1256–threonine 1268.

Belongs to the protein-tyrosine phosphatase family. Receptor class subfamily. As to quaternary structure, interacts with C-type lectin mosGCTL-1; the interaction probably mediates the recruitment of West Nile virus particles in complex with C-type lectin mosGCTL-1 to the cell surface. Interacts with C-type lectin mosGCTL-7; the interaction probably mediates the recruitment of Japanese encephalitis virus particles in complex with C-type lectin mosGCTL-7 to the cell surface. In terms of tissue distribution, salivary gland (at protein level). Hemolymph. Low-level expression in midgut.

The protein localises to the cell membrane. It carries out the reaction O-phospho-L-tyrosyl-[protein] + H2O = L-tyrosyl-[protein] + phosphate. Its function is as follows. Putative protein tyrosine-protein phosphatase. (Microbial infection) Facilitates West Nile virus infection in mosquitoes probably via recruiting West Nile virus particles in complex with C-type lectin mosGCTL-1 to the cell surface. Functionally, (Microbial infection) Facilitates Japanese encephalitis virus infection in mosquitoes probably via recruiting Japanese encephalitis virus particles in complex with C-type lectin mosGCTL-7 to the cell surface. The chain is Putative receptor-type tyrosine-protein phosphatase mosPTP-1 from Aedes aegypti (Yellowfever mosquito).